The following is a 1087-amino-acid chain: Alpha-mannosidase G (1087 aa).

Positions 264, 266, 376, and 579 each coordinate Zn(2+). The Nucleophile role is filled by aspartate 376.

It belongs to the glycosyl hydrolase 38 family. Zn(2+) is required as a cofactor.

The enzyme catalyses Hydrolysis of terminal, non-reducing alpha-D-mannose residues in alpha-D-mannosides.. This Dictyostelium discoideum (Social amoeba) protein is Alpha-mannosidase G (manG).